The chain runs to 244 residues: RNA transcription, translation and transport factor protein (244 aa).

Residues lysine 20, lysine 62, and lysine 98 each carry the N6-acetyllysine modification.

This sequence belongs to the RTRAF family. Homodimer. Interacts with FAM98A (via N- and C-terminus). Interacts with NIN; which may prevent phosphorylation of NIN. Interacts with POLR2A. Component of a tRNA-splicing ligase complex with FAM98B, DDX1 and RTCB. In terms of assembly, (Microbial infection) Interacts with influenza A virus (IAV) RNA polymerase subunits PA, PB1 and PB2, and nucleocapsid NP. Associates with IAV polymerase complexes both in the nucleus and cytosol. Associates with IAV ribonucleoproteins (vRNP) packaged in virions. Interacts with hepatitis C virus core protein p19. Widely expressed. Expressed at high level in heart and skeletal muscle. Expressed at intermediate level in liver, pancreas, fetal brain and fetal lung. Weakly expressed in adult brain, adult lung, placenta, fetal liver and fetal kidney. Overexpressed in many brain tumors.

The protein resides in the nucleus. It is found in the cytoplasm. The protein localises to the cytosol. It localises to the perinuclear region. Its subcellular location is the cytoskeleton. The protein resides in the microtubule organizing center. It is found in the centrosome. In terms of biological role, RNA-binding protein involved in modulation of mRNA transcription by Polymerase II. Component of the tRNA-splicing ligase complex and is required for tRNA ligation. May be required for RNA transport. (Microbial infection) In case of infection by influenza virus A (IVA), is involved in viral replication. The polypeptide is RNA transcription, translation and transport factor protein (Homo sapiens (Human)).